The sequence spans 143 residues: Large ribosomal subunit protein uL16 (143 aa).

Belongs to the universal ribosomal protein uL16 family. As to quaternary structure, part of the 50S ribosomal subunit.

Binds 23S rRNA and is also seen to make contacts with the A and possibly P site tRNAs. The chain is Large ribosomal subunit protein uL16 from Sphingopyxis alaskensis (strain DSM 13593 / LMG 18877 / RB2256) (Sphingomonas alaskensis).